The sequence spans 435 residues: Glutamyl-tRNA reductase (435 aa).

Substrate is bound by residues 50–53, S110, 115–117, and Q121; these read TCNR and ETQ. C51 functions as the Nucleophile in the catalytic mechanism. 189 to 194 lines the NADP(+) pocket; that stretch reads GAGEMS.

This sequence belongs to the glutamyl-tRNA reductase family. In terms of assembly, homodimer.

The enzyme catalyses (S)-4-amino-5-oxopentanoate + tRNA(Glu) + NADP(+) = L-glutamyl-tRNA(Glu) + NADPH + H(+). It participates in porphyrin-containing compound metabolism; protoporphyrin-IX biosynthesis; 5-aminolevulinate from L-glutamyl-tRNA(Glu): step 1/2. Catalyzes the NADPH-dependent reduction of glutamyl-tRNA(Glu) to glutamate 1-semialdehyde (GSA). The protein is Glutamyl-tRNA reductase of Campylobacter lari (strain RM2100 / D67 / ATCC BAA-1060).